We begin with the raw amino-acid sequence, 213 residues long: Orotate phosphoribosyltransferase (213 aa).

Lys26 serves as a coordination point for 5-phospho-alpha-D-ribose 1-diphosphate. 34 to 35 (FF) is an orotate binding site. 5-phospho-alpha-D-ribose 1-diphosphate contacts are provided by residues 72 to 73 (YK), Arg99, Lys100, Lys103, His105, and 124 to 132 (DDVITAGTA). Thr128 and Arg156 together coordinate orotate.

Belongs to the purine/pyrimidine phosphoribosyltransferase family. PyrE subfamily. In terms of assembly, homodimer. It depends on Mg(2+) as a cofactor.

The catalysed reaction is orotidine 5'-phosphate + diphosphate = orotate + 5-phospho-alpha-D-ribose 1-diphosphate. The protein operates within pyrimidine metabolism; UMP biosynthesis via de novo pathway; UMP from orotate: step 1/2. In terms of biological role, catalyzes the transfer of a ribosyl phosphate group from 5-phosphoribose 1-diphosphate to orotate, leading to the formation of orotidine monophosphate (OMP). The polypeptide is Orotate phosphoribosyltransferase (Pseudomonas aeruginosa (strain UCBPP-PA14)).